The primary structure comprises 181 residues: Large ribosomal subunit protein uL5 (181 aa).

This sequence belongs to the universal ribosomal protein uL5 family. In terms of assembly, part of the 50S ribosomal subunit; part of the 5S rRNA/L5/L18/L25 subcomplex. Contacts the 5S rRNA and the P site tRNA. Forms a bridge to the 30S subunit in the 70S ribosome.

Functionally, this is one of the proteins that bind and probably mediate the attachment of the 5S RNA into the large ribosomal subunit, where it forms part of the central protuberance. In the 70S ribosome it contacts protein S13 of the 30S subunit (bridge B1b), connecting the 2 subunits; this bridge is implicated in subunit movement. Contacts the P site tRNA; the 5S rRNA and some of its associated proteins might help stabilize positioning of ribosome-bound tRNAs. The chain is Large ribosomal subunit protein uL5 from Clostridium kluyveri (strain NBRC 12016).